The primary structure comprises 403 residues: S-adenosylmethionine synthase (403 aa).

Position 15 (H15) interacts with ATP. A Mg(2+)-binding site is contributed by D17. E43 is a binding site for K(+). L-methionine is bound by residues E56 and Q99. The flexible loop stretch occupies residues 99 to 109; that stretch reads QSPDINQGVDR. ATP contacts are provided by residues 166–168, 232–233, D241, 247–248, A264, and K268; these read DAK, KF, and RK. Position 241 (D241) interacts with L-methionine. L-methionine is bound at residue K272.

This sequence belongs to the AdoMet synthase family. Homotetramer; dimer of dimers. Mg(2+) serves as cofactor. The cofactor is K(+).

It is found in the cytoplasm. The catalysed reaction is L-methionine + ATP + H2O = S-adenosyl-L-methionine + phosphate + diphosphate. Its pathway is amino-acid biosynthesis; S-adenosyl-L-methionine biosynthesis; S-adenosyl-L-methionine from L-methionine: step 1/1. In terms of biological role, catalyzes the formation of S-adenosylmethionine (AdoMet) from methionine and ATP. The overall synthetic reaction is composed of two sequential steps, AdoMet formation and the subsequent tripolyphosphate hydrolysis which occurs prior to release of AdoMet from the enzyme. The sequence is that of S-adenosylmethionine synthase from Xanthomonas campestris pv. campestris (strain 8004).